A 344-amino-acid polypeptide reads, in one-letter code: Methionine import ATP-binding protein MetN (344 aa).

Residues 2-241 (IELQGLSQRF…PQHEVTRAMI (240 aa)) form the ABC transporter domain. 38–45 (GRSGAGKS) contributes to the ATP binding site.

The protein belongs to the ABC transporter superfamily. Methionine importer (TC 3.A.1.24) family. In terms of assembly, the complex is composed of two ATP-binding proteins (MetN), two transmembrane proteins (MetI) and a solute-binding protein (MetQ).

The protein localises to the cell inner membrane. It catalyses the reaction L-methionine(out) + ATP + H2O = L-methionine(in) + ADP + phosphate + H(+). The enzyme catalyses D-methionine(out) + ATP + H2O = D-methionine(in) + ADP + phosphate + H(+). In terms of biological role, part of the ABC transporter complex MetNIQ involved in methionine import. Responsible for energy coupling to the transport system. The sequence is that of Methionine import ATP-binding protein MetN from Cupriavidus metallidurans (strain ATCC 43123 / DSM 2839 / NBRC 102507 / CH34) (Ralstonia metallidurans).